A 335-amino-acid polypeptide reads, in one-letter code: MDLITLQNFLDNSSFLLLFLTMLIYWAGAAFPNVTWLPTLGTTGVAIANLCMATLLGARWLEAGYFPLSNLYESLFFLAWGVTAIHLVAEQMSRSALVGVVTTPVAMGITAFAALSLPPEMQTSAPLVPALKSNWLMMHVSVMMLSYATLMVGSVLAIAFLVVTRNRDIELKGSSVGTGGYRDKLGRSLLNNNHKQTTVNLTQSNGSGGTAILESVAVKPETVTLSPQRLNLADTLDNISYRIIGLGFPLLTIGIIAGAVWANEAWGSYWSWDPKETWALITWLVFAAYLHARITKGWQGRKPAILAASGFVVVWVCYLGVNLLGKGLHSYGWFF.

A run of 8 helical transmembrane segments spans residues 15 to 35 (FLLL…PNVT), 36 to 56 (WLPT…ATLL), 68 to 88 (LSNL…IHLV), 97 to 117 (LVGV…ALSL), 142 to 162 (VMML…AFLV), 243 to 263 (IIGL…VWAN), 278 to 298 (WALI…TKGW), and 304 to 324 (AILA…VNLL).

This sequence belongs to the CcmF/CycK/Ccl1/NrfE/CcsA family. As to quaternary structure, may interact with ccs1.

It is found in the cellular thylakoid membrane. Required during biogenesis of c-type cytochromes (cytochrome c6 and cytochrome f) at the step of heme attachment. The sequence is that of Cytochrome c biogenesis protein CcsA from Crocosphaera subtropica (strain ATCC 51142 / BH68) (Cyanothece sp. (strain ATCC 51142)).